Here is a 120-residue protein sequence, read N- to C-terminus: Large ribosomal subunit protein bL19 (120 aa).

The protein belongs to the bacterial ribosomal protein bL19 family.

In terms of biological role, this protein is located at the 30S-50S ribosomal subunit interface and may play a role in the structure and function of the aminoacyl-tRNA binding site. The protein is Large ribosomal subunit protein bL19 of Chlorobium luteolum (strain DSM 273 / BCRC 81028 / 2530) (Pelodictyon luteolum).